Reading from the N-terminus, the 59-residue chain is Large ribosomal subunit protein uL30 (59 aa).

Belongs to the universal ribosomal protein uL30 family. As to quaternary structure, part of the 50S ribosomal subunit.

The protein is Large ribosomal subunit protein uL30 of Edwardsiella ictaluri (strain 93-146).